The primary structure comprises 293 residues: Ribosomal protein L11 methyltransferase (293 aa).

S-adenosyl-L-methionine-binding residues include Thr-145, Gly-166, Asp-188, and Asn-230.

The protein belongs to the methyltransferase superfamily. PrmA family.

Its subcellular location is the cytoplasm. It catalyses the reaction L-lysyl-[protein] + 3 S-adenosyl-L-methionine = N(6),N(6),N(6)-trimethyl-L-lysyl-[protein] + 3 S-adenosyl-L-homocysteine + 3 H(+). Functionally, methylates ribosomal protein L11. The protein is Ribosomal protein L11 methyltransferase of Shewanella sp. (strain ANA-3).